We begin with the raw amino-acid sequence, 78 residues long: Conotoxin Bu2 (78 aa).

An N-terminal signal peptide occupies residues 1–19 (MKLTCVLIIAVLFLTAITA). Positions 20 to 41 (DDSRDKQVYRAVGLIDKMRRIR) are excised as a propeptide. 3 disulfide bridges follow: C46/C59, C53/C64, and C58/C73.

Belongs to the conotoxin O1 superfamily. As to expression, expressed by the venom duct.

Its subcellular location is the secreted. This Conus bullatus (Bubble cone) protein is Conotoxin Bu2.